The primary structure comprises 248 residues: Probable transcriptional regulatory protein FTW_1073 (248 aa).

This sequence belongs to the TACO1 family.

It is found in the cytoplasm. The polypeptide is Probable transcriptional regulatory protein FTW_1073 (Francisella tularensis subsp. tularensis (strain WY96-3418)).